A 645-amino-acid chain; its full sequence is Heat shock protein SSA2 (645 aa).

At serine 2 the chain carries N-acetylserine. Residues 581-645 are disordered; it reads ANQTATQEEF…NDGPTVEEVD (65 aa). Positions 611-621 are enriched in low complexity; that stretch reads AGATPSGAAGA.

Belongs to the heat shock protein 70 family. As to quaternary structure, binds human histatin-5, an antifungal peptide from saliva.

It is found in the cytoplasm. It localises to the secreted. Its subcellular location is the cell wall. Functionally, heat shock protein that may play a role in the transport of polypeptides both across the mitochondrial membranes and into the endoplasmic reticulum. Its function is as follows. Acts as a highly immunodominant antigen. Plays a role in the sensitivity to, and the import of candidacidal beta-defensin peptides. HSP70/SSA1 and SSA2 bind histatin-5, a peptide from human saliva, and mediates its fungicidal activity. SSA2 facilitates fungicidal activity of Hst 5 in binding and intracellular translocation, whereas HSP70/SSA1 appears to have a lesser functional role in Hst 5 toxicity. The polypeptide is Heat shock protein SSA2 (Candida albicans (strain SC5314 / ATCC MYA-2876) (Yeast)).